The chain runs to 281 residues: Pantothenate synthetase (281 aa).

30–37 (MGNLHQGH) contributes to the ATP binding site. H37 acts as the Proton donor in catalysis. Q61 serves as a coordination point for (R)-pantoate. Q61 contributes to the beta-alanine binding site. 148–151 (GQKD) contacts ATP. Q154 is a (R)-pantoate binding site. ATP-binding positions include A177 and 185–188 (LSSR).

It belongs to the pantothenate synthetase family. Homodimer.

It is found in the cytoplasm. The enzyme catalyses (R)-pantoate + beta-alanine + ATP = (R)-pantothenate + AMP + diphosphate + H(+). It functions in the pathway cofactor biosynthesis; (R)-pantothenate biosynthesis; (R)-pantothenate from (R)-pantoate and beta-alanine: step 1/1. In terms of biological role, catalyzes the condensation of pantoate with beta-alanine in an ATP-dependent reaction via a pantoyl-adenylate intermediate. The polypeptide is Pantothenate synthetase (Acinetobacter baylyi (strain ATCC 33305 / BD413 / ADP1)).